The chain runs to 312 residues: Olfactory receptor 1D5 (312 aa).

The Extracellular segment spans residues Met1 to Arg25. N-linked (GlcNAc...) asparagine glycosylation is present at Asn5. Residues Ile26 to Ile49 form a helical membrane-spanning segment. Residues Ser50 to Thr57 are Cytoplasmic-facing. The helical transmembrane segment at Pro58–Pro79 threads the bilayer. The Extracellular portion of the chain corresponds to Lys80–Gln100. Cys97 and Cys189 are joined by a disulfide. The chain crosses the membrane as a helical span at residues Leu101 to Tyr120. The Cytoplasmic segment spans residues Asp121–Leu140. A helical transmembrane segment spans residues Cys141–Leu158. The Extracellular portion of the chain corresponds to Leu159–His196. The helical transmembrane segment at Thr197–Arg220 threads the bilayer. Residues Ile221–Thr237 lie on the Cytoplasmic side of the membrane. The chain crosses the membrane as a helical span at residues Phe238–Leu260. Topologically, residues Gln261–Ser271 are extracellular. Residues Val272 to Leu291 traverse the membrane as a helical segment. Topologically, residues Arg292–Lys312 are cytoplasmic.

Belongs to the G-protein coupled receptor 1 family.

It localises to the cell membrane. Odorant receptor. The sequence is that of Olfactory receptor 1D5 (OR1D5) from Homo sapiens (Human).